The sequence spans 260 residues: 14-3-3-like protein GF14-F (260 aa).

The disordered stretch occupies residues 241–260; that stretch reads NAEDGGDEIKEAAKPEGEGH. Residues 247-260 show a composition bias toward basic and acidic residues; sequence DEIKEAAKPEGEGH.

Belongs to the 14-3-3 family. May form a complex with the transcriptional activator VP1 and the bZIP transcription factor EMBP1. As to expression, expressed in seedlings, roots and panicles and at lower levels in flag leaves and internodes.

The protein localises to the cytoplasm. The protein resides in the nucleus. Functionally, is associated with a DNA binding complex that binds to the G box, a well-characterized cis-acting DNA regulatory element found in plant genes. The chain is 14-3-3-like protein GF14-F (GF14F) from Oryza sativa subsp. japonica (Rice).